Consider the following 897-residue polypeptide: Coiled-coil domain-containing protein lobo (897 aa).

The tract at residues 27–49 (EIDEQRRSQGSESDFADEMEGEF) is disordered. Positions 40–49 (DFADEMEGEF) are enriched in acidic residues. Coiled-coil stretches lie at residues 269 to 306 (DLKSHLEEDMAEVHRQKEAEEKRIQDEIIRKQMEDLEL) and 801 to 858 (SLLN…QRLT).

This sequence belongs to the DRC7 family. Testis-specific (at protein level).

Its subcellular location is the cell projection. It is found in the cilium. It localises to the flagellum. The protein localises to the cytoplasm. The protein resides in the cytoskeleton. Its subcellular location is the cilium axoneme. Functionally, key component of the nexin-dynein regulatory complex (N-DRC), essential for N-DRC integrity. Involved in the regulation of flagellar motility. Involved in sperm motility. Required for the sperm to enter in the coiled storage seminal receptacle (SR) tubule. The protein is Coiled-coil domain-containing protein lobo (lobo) of Drosophila melanogaster (Fruit fly).